A 192-amino-acid chain; its full sequence is Imidazole glycerol phosphate synthase subunit HisH (192 aa).

Residues 1-192 (MIVIVDYGLG…QAIQGGFIND (192 aa)) enclose the Glutamine amidotransferase type-1 domain. The Nucleophile role is filled by Cys77. Active-site residues include His169 and Glu171.

In terms of assembly, heterodimer of HisH and HisF.

The protein localises to the cytoplasm. The enzyme catalyses 5-[(5-phospho-1-deoxy-D-ribulos-1-ylimino)methylamino]-1-(5-phospho-beta-D-ribosyl)imidazole-4-carboxamide + L-glutamine = D-erythro-1-(imidazol-4-yl)glycerol 3-phosphate + 5-amino-1-(5-phospho-beta-D-ribosyl)imidazole-4-carboxamide + L-glutamate + H(+). It catalyses the reaction L-glutamine + H2O = L-glutamate + NH4(+). It participates in amino-acid biosynthesis; L-histidine biosynthesis; L-histidine from 5-phospho-alpha-D-ribose 1-diphosphate: step 5/9. In terms of biological role, IGPS catalyzes the conversion of PRFAR and glutamine to IGP, AICAR and glutamate. The HisH subunit catalyzes the hydrolysis of glutamine to glutamate and ammonia as part of the synthesis of IGP and AICAR. The resulting ammonia molecule is channeled to the active site of HisF. This is Imidazole glycerol phosphate synthase subunit HisH from Staphylococcus aureus (strain COL).